Here is a 521-residue protein sequence, read N- to C-terminus: Manganese transporter pdt1 (521 aa).

Serine 42 carries the phosphoserine modification. Threonine 43 carries the phosphothreonine modification. 12 helical membrane passes run 71–91 (YCKF…PGNY), 104–124 (KLLF…SLCI), 152–172 (VLAE…TAVA), 179–199 (IPLV…LIAW), 210–230 (IFET…AVVL), 233–253 (VHIG…TVFS), 260–280 (SIGI…SGLV), 325–345 (LFTF…AVFY), 373–393 (LFAV…TIAG), 417–437 (IAII…LNQV), 440–460 (ASQV…VMFT), and 495–515 (IVTW…IVWL).

The protein belongs to the NRAMP family.

It localises to the endoplasmic reticulum membrane. In terms of biological role, transports manganese ions into the cell. Regulates cell morphogenesis through control of manganese homeostasis. In Schizosaccharomyces pombe (strain 972 / ATCC 24843) (Fission yeast), this protein is Manganese transporter pdt1 (pdt1).